A 243-amino-acid chain; its full sequence is Leucyl/phenylalanyl-tRNA--protein transferase (243 aa).

It belongs to the L/F-transferase family.

The protein localises to the cytoplasm. It catalyses the reaction N-terminal L-lysyl-[protein] + L-leucyl-tRNA(Leu) = N-terminal L-leucyl-L-lysyl-[protein] + tRNA(Leu) + H(+). The enzyme catalyses N-terminal L-arginyl-[protein] + L-leucyl-tRNA(Leu) = N-terminal L-leucyl-L-arginyl-[protein] + tRNA(Leu) + H(+). It carries out the reaction L-phenylalanyl-tRNA(Phe) + an N-terminal L-alpha-aminoacyl-[protein] = an N-terminal L-phenylalanyl-L-alpha-aminoacyl-[protein] + tRNA(Phe). Functions in the N-end rule pathway of protein degradation where it conjugates Leu, Phe and, less efficiently, Met from aminoacyl-tRNAs to the N-termini of proteins containing an N-terminal arginine or lysine. The protein is Leucyl/phenylalanyl-tRNA--protein transferase of Saccharophagus degradans (strain 2-40 / ATCC 43961 / DSM 17024).